We begin with the raw amino-acid sequence, 27 residues long: Delta-actitoxin-Avd2a (27 aa).

3 disulfide bridges follow: cysteine 3–cysteine 17, cysteine 4–cysteine 11, and cysteine 6–cysteine 22.

This sequence belongs to the sea anemone short toxin (type III) family.

It localises to the secreted. It is found in the nematocyst. Its function is as follows. Specific arthropod (crab and insect) toxin that inhibits inactivation of voltage-gated sodium channels. It competes well with the site-3 toxin LqhalphaIT (from the scorpion L.quinquestriatus (AC P17728)) on binding to cockroach neuronal membranes (Ki=21.4 nM), and inhibits the inactivation of D.melanogaster channel (DmNav1), but not that of mammalian Navs expressed in Xenopus oocytes. Its activity is synergically enhanced by ligands of receptor site-4 (Bj-xtrIT (AC P56637)). Its ability to inhibit the channel mutant DmNav1[D1701R] only decreases 5-fold, whereas the inhibition activity is completely lost by LqhalphaIT and Av2 when tested on DmNav1[D1701R]. This is Delta-actitoxin-Avd2a from Anemonia sulcata (Mediterranean snakelocks sea anemone).